A 143-amino-acid polypeptide reads, in one-letter code: SsrA-binding protein (143 aa).

This sequence belongs to the SmpB family.

It is found in the cytoplasm. Functionally, required for rescue of stalled ribosomes mediated by trans-translation. Binds to transfer-messenger RNA (tmRNA), required for stable association of tmRNA with ribosomes. tmRNA and SmpB together mimic tRNA shape, replacing the anticodon stem-loop with SmpB. tmRNA is encoded by the ssrA gene; the 2 termini fold to resemble tRNA(Ala) and it encodes a 'tag peptide', a short internal open reading frame. During trans-translation Ala-aminoacylated tmRNA acts like a tRNA, entering the A-site of stalled ribosomes, displacing the stalled mRNA. The ribosome then switches to translate the ORF on the tmRNA; the nascent peptide is terminated with the 'tag peptide' encoded by the tmRNA and targeted for degradation. The ribosome is freed to recommence translation, which seems to be the essential function of trans-translation. In Deinococcus radiodurans (strain ATCC 13939 / DSM 20539 / JCM 16871 / CCUG 27074 / LMG 4051 / NBRC 15346 / NCIMB 9279 / VKM B-1422 / R1), this protein is SsrA-binding protein.